Reading from the N-terminus, the 289-residue chain is ATP synthase gamma chain (289 aa).

This sequence belongs to the ATPase gamma chain family. In terms of assembly, F-type ATPases have 2 components, CF(1) - the catalytic core - and CF(0) - the membrane proton channel. CF(1) has five subunits: alpha(3), beta(3), gamma(1), delta(1), epsilon(1). CF(0) has three main subunits: a, b and c.

The protein localises to the cell inner membrane. In terms of biological role, produces ATP from ADP in the presence of a proton gradient across the membrane. The gamma chain is believed to be important in regulating ATPase activity and the flow of protons through the CF(0) complex. The protein is ATP synthase gamma chain of Coxiella burnetii (strain Dugway 5J108-111).